The primary structure comprises 1017 residues: Pikachurin (1017 aa).

A signal peptide spans 1 to 24 (MDLIRGVLLRLLLLASSLGPGAVS). Fibronectin type-III domains follow at residues 37-136 (PPLD…TLSQ) and 144-239 (APQQ…TLCP). N-linked (GlcNAc...) asparagine glycosylation is present at N47. Residues 343 to 381 (FDMPCDETLCSADSFCVNDYTWGGSRCQCTLGKGGESCS) enclose the EGF-like 1 domain. 11 cysteine pairs are disulfide-bonded: C347–C358, C352–C369, C371–C380, C534–C564, C569–C580, C574–C590, C592–C601, C788–C799, C793–C808, C810–C819, and C987–C1014. One can recognise a Laminin G-like 1 domain in the interval 386 to 564 (IQYPQFFGHS…ALSGADVGEC (179 aa)). EGF-like domains are found at residues 565 to 602 (SSGICDEASCIHGGTCTAIKADSYICLCPLGFKGRHCE) and 784 to 820 (AAHPCVRAPCAHGGSCRPRKEGYDCDCPLGFEGLHCQ). In terms of domain architecture, Laminin G-like 2 spans 609 to 788 (IPQFRESLRS…VNVENAAHPC (180 aa)). One can recognise a Laminin G-like 3 domain in the interval 835-1014 (IEIPQFIGRS…AVDGKNINTC (180 aa)).

Interacts with DAG1 alpha-dystroglycan. Interacts with GPR158 and GPR179; transsynaptic interaction is required for synaptic organization of photoreceptor cells. In terms of processing, O-glycosylated; contains chondroitin sulfate and heparan sulfate.

It localises to the secreted. The protein resides in the extracellular space. Its subcellular location is the extracellular matrix. The protein localises to the synaptic cleft. It is found in the presynaptic active zone. Involved in both the retinal photoreceptor ribbon synapse formation and physiological functions of visual perception. Plays a key role in the synaptic organization of photoreceptors by mediating transsynaptic interaction between alpha-dystroglycan and GPR179 on the postsynaptic membrane. Necessary for proper bipolar dendritic tip apposition to the photoreceptor ribbon synapse. Promotes matrix assembly and cell adhesiveness. The polypeptide is Pikachurin (EGFLAM) (Homo sapiens (Human)).